The following is a 440-amino-acid chain: 23S rRNA (uracil(1939)-C(5))-methyltransferase RlmD (440 aa).

The TRAM domain maps to 8 to 69 (PQKINKLQRE…RQFGLATTKK (62 aa)). Cys82, Cys88, Cys91, and Cys169 together coordinate [4Fe-4S] cluster. Residues Gln272, Phe301, Asn306, Glu322, Asp349, and Asp370 each coordinate S-adenosyl-L-methionine. Cys396 acts as the Nucleophile in catalysis.

The protein belongs to the class I-like SAM-binding methyltransferase superfamily. RNA M5U methyltransferase family. RlmD subfamily.

It catalyses the reaction uridine(1939) in 23S rRNA + S-adenosyl-L-methionine = 5-methyluridine(1939) in 23S rRNA + S-adenosyl-L-homocysteine + H(+). Functionally, catalyzes the formation of 5-methyl-uridine at position 1939 (m5U1939) in 23S rRNA. The protein is 23S rRNA (uracil(1939)-C(5))-methyltransferase RlmD of Mannheimia succiniciproducens (strain KCTC 0769BP / MBEL55E).